We begin with the raw amino-acid sequence, 838 residues long: Phosphatidylethanolamine N-methyltransferase 1 (838 aa).

The Lumenal portion of the chain corresponds to 1-48 (MATEIITEKKEIVARTRSSGITFNPPVTHDMVRSLFDPTIKKSFLECC). Residues 49–69 (ITLTILANFVLCYYLINWFGL) form a helical membrane-spanning segment. Over 70 to 73 (SQAK) the chain is Cytoplasmic. The chain crosses the membrane as a helical span at residues 74-94 (LIFLIQYVYWRLAYNLGIGII). At 95–157 (LHYQSHYESL…ELNCWLLFRQ (63 aa)) the chain is on the lumenal side. A helical transmembrane segment spans residues 158-178 (FVDLILMQDFTTYIIYVYLSL). Residues 179-184 (PTDVSS) lie on the Cytoplasmic side of the membrane. The helical transmembrane segment at 185–205 (LINWKSLIGIAMILFNIWVKI) threads the bilayer. At 206-236 (DAHRVVKDYAWYWGDFFFLQDAELTFDGVFN) the chain is on the lumenal side. The chain crosses the membrane as a helical span at residues 237-257 (ISPHPMYSIGYLGYYGLSLIC). Residues 258 to 261 (GDYR) lie on the Cytoplasmic side of the membrane. Residues 262–282 (VLLVSVGGHFLQFLFLKYVES) traverse the membrane as a helical segment. Over 283–328 (PHIERTYGSDSPSNSTQHQIDDLIAKENYDYSRPLINTGILFENFQ) the chain is Lumenal. The helical transmembrane segment at 329 to 349 (FLRFSDYFTVSTILVLFSWFF) threads the bilayer. Over 350-356 (TSKPSNN) the chain is Cytoplasmic. A helical membrane pass occupies residues 357–377 (FLFVLTLLTKLTTWLLTSWIL). The Lumenal segment spans residues 378–403 (FQQSNRKWFTRLFLKNGYTQIYSYQQ). The chain crosses the membrane as a helical span at residues 404-424 (WQFLYNYSLIVTNTLLFLHTL). Topologically, residues 425–435 (SELYSIQSSDG) are cytoplasmic. A helical transmembrane segment spans residues 436–456 (LNNSHVIFGLLLCAIQIWCNV). Residues 457–517 (ETRDAISDFG…VLMTNFSKTN (61 aa)) lie on the Lumenal side of the membrane. The helical transmembrane segment at 518 to 538 (VTLAVLWTVTNLIFVKLIEEP) threads the bilayer. At 539-838 (HVSKVYGNGT…DIKEVLDSLN (300 aa)) the chain is on the cytoplasmic side.

It belongs to the class VI-like SAM-binding methyltransferase superfamily. CHO2 family.

The protein resides in the endoplasmic reticulum membrane. The catalysed reaction is a 1,2-diacyl-sn-glycero-3-phosphoethanolamine + S-adenosyl-L-methionine = a 1,2-diacyl-sn-glycero-3-phospho-N-methylethanolamine + S-adenosyl-L-homocysteine + H(+). The protein operates within phospholipid metabolism; phosphatidylcholine biosynthesis. Catalyzes the first step of the methylation pathway of phosphatidylcholine biosynthesis, the SAM-dependent methylation of phosphatidylethanolamine (PE) to phosphatidylmonomethylethanolamine (PMME). The polypeptide is Phosphatidylethanolamine N-methyltransferase 1 (CHO2-1) (Vanderwaltozyma polyspora (strain ATCC 22028 / DSM 70294 / BCRC 21397 / CBS 2163 / NBRC 10782 / NRRL Y-8283 / UCD 57-17) (Kluyveromyces polysporus)).